Consider the following 345-residue polypeptide: Phosphoribosylformylglycinamidine cyclo-ligase (345 aa).

It belongs to the AIR synthase family.

The protein resides in the cytoplasm. It carries out the reaction 2-formamido-N(1)-(5-O-phospho-beta-D-ribosyl)acetamidine + ATP = 5-amino-1-(5-phospho-beta-D-ribosyl)imidazole + ADP + phosphate + H(+). The protein operates within purine metabolism; IMP biosynthesis via de novo pathway; 5-amino-1-(5-phospho-D-ribosyl)imidazole from N(2)-formyl-N(1)-(5-phospho-D-ribosyl)glycinamide: step 2/2. This Synechococcus sp. (strain CC9605) protein is Phosphoribosylformylglycinamidine cyclo-ligase.